The following is a 435-amino-acid chain: D-aminoacyl-tRNA deacylase (435 aa).

Belongs to the DtdA deacylase family. As to quaternary structure, monomer. Requires Zn(2+) as cofactor.

The enzyme catalyses a D-aminoacyl-tRNA + H2O = a tRNA + a D-alpha-amino acid + H(+). It catalyses the reaction glycyl-tRNA(Ala) + H2O = tRNA(Ala) + glycine + H(+). Its function is as follows. D-aminoacyl-tRNA deacylase with broad substrate specificity. By recycling D-aminoacyl-tRNA to D-amino acids and free tRNA molecules, this enzyme counteracts the toxicity associated with the formation of D-aminoacyl-tRNA entities in vivo. The sequence is that of D-aminoacyl-tRNA deacylase from Methanosphaerula palustris (strain ATCC BAA-1556 / DSM 19958 / E1-9c).